Consider the following 213-residue polypeptide: Probable transaldolase (213 aa).

The active-site Schiff-base intermediate with substrate is the lysine 83.

This sequence belongs to the transaldolase family. Type 3B subfamily.

It is found in the cytoplasm. It carries out the reaction D-sedoheptulose 7-phosphate + D-glyceraldehyde 3-phosphate = D-erythrose 4-phosphate + beta-D-fructose 6-phosphate. The protein operates within carbohydrate degradation; pentose phosphate pathway; D-glyceraldehyde 3-phosphate and beta-D-fructose 6-phosphate from D-ribose 5-phosphate and D-xylulose 5-phosphate (non-oxidative stage): step 2/3. Its function is as follows. Transaldolase is important for the balance of metabolites in the pentose-phosphate pathway. The chain is Probable transaldolase from Oceanobacillus iheyensis (strain DSM 14371 / CIP 107618 / JCM 11309 / KCTC 3954 / HTE831).